The sequence spans 293 residues: 4-hydroxy-tetrahydrodipicolinate synthase (293 aa).

Residue Thr-45 participates in pyruvate binding. Tyr-133 acts as the Proton donor/acceptor in catalysis. Catalysis depends on Lys-161, which acts as the Schiff-base intermediate with substrate. Ile-203 contacts pyruvate.

Belongs to the DapA family. Homotetramer; dimer of dimers.

It is found in the cytoplasm. The catalysed reaction is L-aspartate 4-semialdehyde + pyruvate = (2S,4S)-4-hydroxy-2,3,4,5-tetrahydrodipicolinate + H2O + H(+). It functions in the pathway amino-acid biosynthesis; L-lysine biosynthesis via DAP pathway; (S)-tetrahydrodipicolinate from L-aspartate: step 3/4. Functionally, catalyzes the condensation of (S)-aspartate-beta-semialdehyde [(S)-ASA] and pyruvate to 4-hydroxy-tetrahydrodipicolinate (HTPA). This Aliivibrio salmonicida (strain LFI1238) (Vibrio salmonicida (strain LFI1238)) protein is 4-hydroxy-tetrahydrodipicolinate synthase.